The chain runs to 222 residues: Protein GrpE (222 aa).

Positions M1–P21 are disordered.

It belongs to the GrpE family. Homodimer.

It localises to the cytoplasm. In terms of biological role, participates actively in the response to hyperosmotic and heat shock by preventing the aggregation of stress-denatured proteins, in association with DnaK and GrpE. It is the nucleotide exchange factor for DnaK and may function as a thermosensor. Unfolded proteins bind initially to DnaJ; upon interaction with the DnaJ-bound protein, DnaK hydrolyzes its bound ATP, resulting in the formation of a stable complex. GrpE releases ADP from DnaK; ATP binding to DnaK triggers the release of the substrate protein, thus completing the reaction cycle. Several rounds of ATP-dependent interactions between DnaJ, DnaK and GrpE are required for fully efficient folding. In Bartonella tribocorum (strain CIP 105476 / IBS 506), this protein is Protein GrpE.